A 627-amino-acid polypeptide reads, in one-letter code: Translation factor GUF1, mitochondrial (627 aa).

The transit peptide at 1 to 16 (MSLAWSAGRAWSRQSY) directs the protein to the mitochondrion. A tr-type G domain is found at 40 to 221 (ERYRNFCIVA…AVIERIPHPV (182 aa)). Residues 49–56 (AHIDHGKS), 114–118 (DTPGH), and 168–171 (NKID) each bind GTP.

The protein belongs to the TRAFAC class translation factor GTPase superfamily. Classic translation factor GTPase family. LepA subfamily.

It localises to the mitochondrion inner membrane. The catalysed reaction is GTP + H2O = GDP + phosphate + H(+). Promotes mitochondrial protein synthesis. May act as a fidelity factor of the translation reaction, by catalyzing a one-codon backward translocation of tRNAs on improperly translocated ribosomes. Binds to mitochondrial ribosomes in a GTP-dependent manner. This Fusarium vanettenii (strain ATCC MYA-4622 / CBS 123669 / FGSC 9596 / NRRL 45880 / 77-13-4) (Fusarium solani subsp. pisi) protein is Translation factor GUF1, mitochondrial.